Consider the following 1828-residue polypeptide: Unconventional myosin-Va (1828 aa).

Ala-2 is modified (N-acetylalanine). A Myosin N-terminal SH3-like domain is found at 8-60; the sequence is TKFARVWIPDPEEVWKSAELLKDYKPGDKVLLLHLEEGKDLEYRLDPKTSELP. Residues 69–763 enclose the Myosin motor domain; the sequence is VGENDLTALS…QVAYLEKLRA (695 aa). Residue 163–170 coordinates ATP; the sequence is GESGAGKT. Residues 599–633 are disordered; that stretch reads ISPTSATSSGRTPLTRVPVKPTKGRPGQTAKEHKK. A Phosphoserine modification is found at Ser-600. Polar residues predominate over residues 600 to 610; it reads SPTSATSSGRT. Residues 643–665 form an actin-binding region; sequence LHLLMETLNATTPHYVRCIKPND. IQ domains are found at residues 766–788, 789–813, 814–836, 837–861, 862–884, and 885–914; these read LRAA…RYLC, MQRA…KFLR, RTKA…KYKI, RRAA…RKIL, REHK…HYKR, and TMKA…EARS. Coiled-coil stretches lie at residues 914–1239 and 1314–1418; these read SVER…EVNA and GLKE…ELEV. Phosphothreonine is present on Thr-1032. The tract at residues 1105–1147 is disordered; the sequence is VPKPGHKRTDSTHSSNESEYTFSSEFAETEDIAPRTEEPTEKK. Over residues 1116–1130 the composition is skewed to polar residues; that stretch reads THSSNESEYTFSSEF. The segment covering 1136–1147 has biased composition (basic and acidic residues); it reads IAPRTEEPTEKK. Phosphoserine occurs at positions 1425 and 1625. One can recognise a Dilute domain in the interval 1507 to 1783; it reads TSTINSIKKV…IRTIQVRLRD (277 aa). A Phosphothreonine modification is found at Thr-1733.

Belongs to the TRAFAC class myosin-kinesin ATPase superfamily. Myosin family. As to quaternary structure, may be a homodimer, which associates with multiple calmodulin or myosin light chains. Interacts with RIPL2, the interaction is required for its role in dendrite formation. Interacts with MLPH. Interacts with SYTL4. Interacts with MYRIP. Interacts with RAB10; mediates the transport to the plasma membrane of SLC2A4/GLUT4 storage vesicles. Interacts with FMR1; this interaction occurs in association with polyribosome.

It carries out the reaction ATP + H2O = ADP + phosphate + H(+). Processive actin-based motor that can move in large steps approximating the 36-nm pseudo-repeat of the actin filament. Can hydrolyze ATP in the presence of actin, which is essential for its function as a motor protein. Involved in melanosome transport. Also mediates the transport of vesicles to the plasma membrane. May also be required for some polarization process involved in dendrite formation. The chain is Unconventional myosin-Va (Myo5a) from Rattus norvegicus (Rat).